A 147-amino-acid polypeptide reads, in one-letter code: uncharacterized protein (147 aa).

4Fe-4S ferredoxin-type domains are found at residues 80-109 (WYPK…AENG) and 110-141 (KVVV…FPDE). Residues C89, C92, C95, C99, C119, C123, C126, and C130 each coordinate [4Fe-4S] cluster.

It depends on [4Fe-4S] cluster as a cofactor.

This is an uncharacterized protein from Methanocaldococcus jannaschii (strain ATCC 43067 / DSM 2661 / JAL-1 / JCM 10045 / NBRC 100440) (Methanococcus jannaschii).